A 295-amino-acid chain; its full sequence is Glycine N-methyltransferase (295 aa).

An N-acetylvaline modification is found at valine 2. Residues serine 4 and tyrosine 6 each coordinate (6S)-5-methyl-5,6,7,8-tetrahydrofolate. The residue at position 10 (serine 10) is a Phosphoserine. The S-adenosyl-L-methionine site is built by tyrosine 22, tryptophan 31, tyrosine 34, and arginine 41. Tyrosine 34 is subject to Phosphotyrosine. At lysine 46 the chain carries N6-succinyllysine. S-adenosyl-L-methionine is bound by residues alanine 65, 86–88 (DAS), 117–118 (NW), 139–142 (LGNS), and arginine 178. 3 positions are modified to N6-succinyllysine: lysine 193, lysine 198, and lysine 203. (6S)-5-methyl-5,6,7,8-tetrahydrofolate is bound at residue histidine 217. S-adenosyl-L-methionine is bound at residue tyrosine 223. Arginine 242 contributes to the (6S)-5-methyl-5,6,7,8-tetrahydrofolate binding site.

It belongs to the class I-like SAM-binding methyltransferase superfamily. Glycine N-methyltransferase family. As to quaternary structure, homotetramer. In terms of tissue distribution, expressed only in liver, pancreas, and prostate.

Its subcellular location is the cytoplasm. It catalyses the reaction glycine + S-adenosyl-L-methionine = sarcosine + S-adenosyl-L-homocysteine + H(+). Inhibited by 5-methyltetrahydrofolate monoglutamate and by 5-methyltetrahydrofolate pentaglutamate, inhibition is much more effective by the pentaglutamate form than by the monoglutamate form. Two molecules of 5-methyltetrahydrofolate are bound per tetramer. The binding sites are localized between subunits. Inhibitor binding may preclude movements of the polypeptide chain that are necessary for enzyme activity. Its function is as follows. Catalyzes the methylation of glycine by using S-adenosylmethionine (AdoMet) to form N-methylglycine (sarcosine) with the concomitant production of S-adenosylhomocysteine (AdoHcy), a reaction regulated by the binding of 5-methyltetrahydrofolate. Plays an important role in the regulation of methyl group metabolism by regulating the ratio between S-adenosyl-L-methionine and S-adenosyl-L-homocysteine. The sequence is that of Glycine N-methyltransferase from Homo sapiens (Human).